Consider the following 288-residue polypeptide: Serine/threonine-protein phosphatase PGAM5, mitochondrial (288 aa).

Residues 1 to 6 lie on the Mitochondrial matrix side of the membrane; that stretch reads MAFRQA. Residues 7-29 traverse the membrane as a helical segment; the sequence is LQLAACGLAGGSAAVLFSAVAVG. Residues 30 to 288 lie on the Mitochondrial intermembrane side of the membrane; sequence KPRAGGDADT…FMPPDKITRS (259 aa). Residues 76–81 form an interaction with KEAP1 region; the sequence is NVEFGE. At S86 the chain carries Phosphoserine. Residues K115, K143, and K190 each carry the N6-acetyllysine modification.

The protein belongs to the phosphoglycerate mutase family. BPG-dependent PGAM subfamily. Dimer. Forms a ternary complex with NFE2L2 and KEAP1. Interacts with BCL2L1 and MAP3K5. Upon TNF-induced necrosis, forms in complex with RIPK1, RIPK3 and MLKL; the formation of this complex leads to PGAM5 phosphorylation. Isoform 2, but not isoform 1, interacts with DNM1L; this interaction leads to DNM1L dephosphorylation and activation and eventually to mitochondria fragmentation. Phosphorylated by the RIPK1/RIPK3 complex under necrotic conditions. This phosphorylation increases PGAM5 phosphatase activity. In terms of processing, proteolytically cleaved by PARL in response to loss of mitochondrial membrane potential.

Its subcellular location is the mitochondrion outer membrane. It is found in the mitochondrion inner membrane. The catalysed reaction is O-phospho-L-seryl-[protein] + H2O = L-seryl-[protein] + phosphate. It carries out the reaction O-phospho-L-threonyl-[protein] + H2O = L-threonyl-[protein] + phosphate. In terms of biological role, mitochondrial serine/threonine phosphatase that dephosphorylates various substrates and thus plays a role in different biological processes including cellular senescence or mitophagy. Modulates cellular senescence by regulating mitochondrial dynamics. Mechanistically, participates in mitochondrial fission through dephosphorylating DNM1L/DRP1. Additionally, dephosphorylates MFN2 in a stress-sensitive manner and consequently protects it from ubiquitination and degradation to promote mitochondrial network formation. Regulates mitophagy independent of PARKIN by interacting with and dephosphorylating FUNDC1, which interacts with LC3. Regulates anti-oxidative response by forming a tertiary complex with KEAP1 and NRF2. Regulates necroptosis by acting as a RIPK3 target and recruiting the RIPK1-RIPK3-MLKL necrosis 'attack' complex to mitochondria. The sequence is that of Serine/threonine-protein phosphatase PGAM5, mitochondrial (Pgam5) from Rattus norvegicus (Rat).